The primary structure comprises 245 residues: 5-oxoprolinase subunit A (245 aa).

This sequence belongs to the LamB/PxpA family. As to quaternary structure, forms a complex composed of PxpA, PxpB and PxpC.

It catalyses the reaction 5-oxo-L-proline + ATP + 2 H2O = L-glutamate + ADP + phosphate + H(+). Its function is as follows. Catalyzes the cleavage of 5-oxoproline to form L-glutamate coupled to the hydrolysis of ATP to ADP and inorganic phosphate. In Haemophilus influenzae (strain 86-028NP), this protein is 5-oxoprolinase subunit A.